The following is a 522-amino-acid chain: Putative aldehyde dehydrogenase-like protein C21C3 (522 aa).

Glu239 (proton acceptor) is an active-site residue. The active-site Nucleophile is the Cys273.

This sequence belongs to the aldehyde dehydrogenase family.

Its subcellular location is the cytoplasm. The protein localises to the nucleus. The polypeptide is Putative aldehyde dehydrogenase-like protein C21C3 (Schizosaccharomyces pombe (strain 972 / ATCC 24843) (Fission yeast)).